Reading from the N-terminus, the 806-residue chain is Transitional endoplasmic reticulum ATPase (806 aa).

Position 2 is an N-acetylalanine (Ala2). Phosphoserine occurs at positions 3 and 7. Lys8 participates in a covalent cross-link: Glycyl lysine isopeptide (Lys-Gly) (interchain with G-Cter in SUMO2). Ser13 is subject to Phosphoserine. Lys18 is covalently cross-linked (Glycyl lysine isopeptide (Lys-Gly) (interchain with G-Cter in SUMO2)). The residue at position 37 (Ser37) is a Phosphoserine. ATP is bound at residue 247–253 (PGTGKTL). Residue Lys315 is modified to N6,N6,N6-trimethyllysine; by VCPKMT. Positions 348 and 384 each coordinate ATP. Thr436 carries the phosphothreonine modification. Ser462 is modified (phosphoserine). N6-acetyllysine is present on residues Lys502 and Lys505. An ATP-binding site is contributed by 521 to 526 (GCGKTL). Lys668 carries the N6-acetyllysine; alternate modification. An N6-succinyllysine; alternate modification is found at Lys668. Residue Ser702 is modified to Phosphoserine. Residues 708–727 (RRERERQTNPSAMEVEEDDP) are disordered. An N6-acetyllysine modification is found at Lys754. Positions 768 to 806 (FGSFRFPSGNQGGAGPSQGSGGGTGGSVYTEDNDDDLYG) are disordered. Phosphoserine is present on residues Ser770, Ser775, and Ser787. Positions 777–793 (NQGGAGPSQGSGGGTGG) are enriched in gly residues. The segment at 797–806 (TEDNDDDLYG) is interaction with UBXN6. Tyr805 bears the Phosphotyrosine mark.

This sequence belongs to the AAA ATPase family. As to quaternary structure, homohexamer. Forms a ring-shaped particle of 12.5 nm diameter, that displays 6-fold radial symmetry. Part of a ternary complex containing STX5A, NSFL1C and VCP. NSFL1C forms a homotrimer that binds to one end of a VCP homohexamer. The complex binds to membranes enriched in phosphatidylethanolamine-containing lipids and promotes Golgi membrane fusion. Binds to a heterodimer of NPLOC4 and UFD1, binding to this heterodimer inhibits Golgi-membrane fusion. Interaction with VCIP135 leads to dissociation of the complex via ATP hydrolysis by VCP. Part of a ternary complex containing NPLOC4, UFD1 and VCP. Interacts with NSFL1C-like protein p37; the complex has membrane fusion activity and is required for Golgi and endoplasmic reticulum biogenesis. Interacts with SELENOS and SYVN1, as well as with DERL1 (via SHP-box motif), DERL2 and DERL3; which probably transfer misfolded proteins from the ER to VCP. Interacts with SVIP and DERL1. Component of a complex required to couple retrotranslocation, ubiquitination and deglycosylation composed of NGLY1, SAKS1, AMFR, VCP and RAD23B. Part of a complex composed of STUB1/CHIP, VCP/p97, CHRNA3, and UBXN2A that modulates the ubiquitination and endoplasmic reticulum-associated degradation (ERAD) of CHRNA3. Within the complex UBXN2A acts as a scaffold protein required for the interaction of CHRNA3 with VCP/p97, this interaction also inhibits CHRNA3 ubiquitination by STUB1/CHIP and subsequently ERAD. Interacts with UBXN2A (via UBX domain); the interaction is required for the interaction of CHRNA3 in the STUB1-VCP-UBXN2A complex. Directly interacts with UBXN4 and RNF19A. Interacts with CASR. Interacts with UBE4B and YOD1. Interacts with clathrin. Interacts with RNF103. Interacts with TRIM13 and TRIM21. Component of a VCP/p97-AMFR/gp78 complex that participates in the final step of the endoplasmic reticulum-associated degradation (ERAD) of HMGCR. Interacts directly with AMFR/gp78 (via its VIM). Interacts with RHBDD1 (via C-terminal domain). Interacts with SPRTN; leading to recruitment to stalled replication forks. Interacts with WASHC5. Interacts with UBOX5. Interacts (via N-terminus) with UBXN7, UBXN8, and probably several other UBX domain-containing proteins (via UBX domains); the interactions are mutually exclusive with VIM-dependent interactions such as those with AMFR and SELENOS. Forms a complex with UBQLN1 and UBXN4. Interacts (via the PIM motif) with RNF31 (via the PUB domain). Interacts with RIGI and RNF125; interaction takes place when RIGI is ubiquitinated via 'Lys-63'-linked ubiquitin on its CARD domains, leading to recruit RNF125 and promote ubiquitination and degradation of RIGI. Interacts with BAG6. Interacts with UBXN10. Interacts with UBXN6; the interaction with UBXN6 is direct and competitive with UFD1. Forms a ternary complex with CAV1 and UBXN6. Interacts with PLAA, UBXN6 and YOD1; may form a complex involved in macroautophagy. Interacts with ANKZF1. Interacts with ubiquitin-binding protein FAF1. Interacts with ZFAND2B (via VIM motif); the interaction is direct. Interacts with ZFAND1 (via its ubiquitin-like region); this interaction occurs in an arsenite-dependent manner. Interacts with CCDC47. Interacts with LMBR1L and UBAC2. Interacts with ATXN3. Interacts with TEX264; bridging VCP to covalent DNA-protein cross-links (DPCs). Mg(2+) is required as a cofactor. ISGylated. Post-translationally, methylation at Lys-315 catalyzed by VCPKMT is increased in the presence of ASPSCR1. Lys-315 methylation may decrease ATPase activity. In terms of processing, phosphorylated by tyrosine kinases in response to T-cell antigen receptor activation. Phosphorylated in mitotic cells.

The protein resides in the cytoplasm. Its subcellular location is the cytosol. It is found in the endoplasmic reticulum. The protein localises to the nucleus. It localises to the stress granule. It carries out the reaction ATP + H2O = ADP + phosphate + H(+). Its function is as follows. Necessary for the fragmentation of Golgi stacks during mitosis and for their reassembly after mitosis. Involved in the formation of the transitional endoplasmic reticulum (tER). The transfer of membranes from the endoplasmic reticulum to the Golgi apparatus occurs via 50-70 nm transition vesicles which derive from part-rough, part-smooth transitional elements of the endoplasmic reticulum (tER). Vesicle budding from the tER is an ATP-dependent process. The ternary complex containing UFD1, VCP and NPLOC4 binds ubiquitinated proteins and is necessary for the export of misfolded proteins from the ER to the cytoplasm, where they are degraded by the proteasome. The NPLOC4-UFD1-VCP complex regulates spindle disassembly at the end of mitosis and is necessary for the formation of a closed nuclear envelope. Regulates E3 ubiquitin-protein ligase activity of RNF19A. Component of the VCP/p97-AMFR/gp78 complex that participates in the final step of the sterol-mediated ubiquitination and endoplasmic reticulum-associated degradation (ERAD) of HMGCR. Mediates the endoplasmic reticulum-associated degradation of CHRNA3 in cortical neurons as part of the STUB1-VCP-UBXN2A complex. Involved in endoplasmic reticulum stress-induced pre-emptive quality control, a mechanism that selectively attenuates the translocation of newly synthesized proteins into the endoplasmic reticulum and reroutes them to the cytosol for proteasomal degradation. Involved in clearance process by mediating G3BP1 extraction from stress granules. Also involved in DNA damage response: recruited to double-strand breaks (DSBs) sites in a RNF8- and RNF168-dependent manner and promotes the recruitment of TP53BP1 at DNA damage sites. Recruited to stalled replication forks by SPRTN: may act by mediating extraction of DNA polymerase eta (POLH) to prevent excessive translesion DNA synthesis and limit the incidence of mutations induced by DNA damage. Together with SPRTN metalloprotease, involved in the repair of covalent DNA-protein cross-links (DPCs) during DNA synthesis. Involved in interstrand cross-link repair in response to replication stress by mediating unloading of the ubiquitinated CMG helicase complex. Mediates extraction of PARP1 trapped to chromatin: recognizes and binds ubiquitinated PARP1 and promotes its removal. Required for cytoplasmic retrotranslocation of stressed/damaged mitochondrial outer-membrane proteins and their subsequent proteasomal degradation. Essential for the maturation of ubiquitin-containing autophagosomes and the clearance of ubiquitinated protein by autophagy. Acts as a negative regulator of type I interferon production by interacting with RIGI: interaction takes place when RIGI is ubiquitinated via 'Lys-63'-linked ubiquitin on its CARD domains, leading to recruit RNF125 and promote ubiquitination and degradation of RIGI. May play a role in the ubiquitin-dependent sorting of membrane proteins to lysosomes where they undergo degradation. May more particularly play a role in caveolins sorting in cells. By controlling the steady-state expression of the IGF1R receptor, indirectly regulates the insulin-like growth factor receptor signaling pathway. The chain is Transitional endoplasmic reticulum ATPase (VCP) from Sus scrofa (Pig).